The primary structure comprises 285 residues: Energy-coupling factor transporter ATP-binding protein EcfA2 (285 aa).

Positions 3–245 (IKIENLNHIY…VETLEKIGLA (243 aa)) constitute an ABC transporter domain. Residue 40–47 (GHTGSGKS) participates in ATP binding.

The protein belongs to the ABC transporter superfamily. Energy-coupling factor EcfA family. In terms of assembly, forms a stable energy-coupling factor (ECF) transporter complex composed of 2 membrane-embedded substrate-binding proteins (S component), 2 ATP-binding proteins (A component) and 2 transmembrane proteins (T component).

It is found in the cell membrane. ATP-binding (A) component of a common energy-coupling factor (ECF) ABC-transporter complex. Unlike classic ABC transporters this ECF transporter provides the energy necessary to transport a number of different substrates. In Clostridium perfringens (strain 13 / Type A), this protein is Energy-coupling factor transporter ATP-binding protein EcfA2.